Here is a 502-residue protein sequence, read N- to C-terminus: MADENPQAQGAEGGGKGKSSSMRLQERHQQLRKRGRTPPSAYARRDMNETAQQHNRNESSNRSPSPLAPPRSPSPDAQARKRKRPGGGARMGLVDRETLRRRQEERERSQQEEAMRFSQNRGVTDIVRHHYNAVPQRGREWRKTESKIKGLRSFNNWIKSTLIQKFSPDEEFVARSIGTKDWADETAPPPMEDKRLLVVDLGCGKGGDLGKWQLAPQPVDLYVGLDPAEVSIVQARERYNGMRTGRGPRGRRGPLFHAEFAPKDCFGEYLGDVPIVQQVGIDPNAGPGGSVMSSRWGGGGFDVVASMFTIHYAFESEEKARQMLRNVAGCLKKGGRFLGVCPNSDIISARVAEMNAKRKERETAAKKEEAEPEDGEVEEDDNKIEWGNSIYRVRFSGDTPEDGIFRPPFGWKYSYFMEEAVEEIPEYVVPWEAFRALTEDYNLELQYRKPFLEVWKDEKDDQELGPLSERMGVRDRNTGALLMTEEEKEAASFYHAFCFYKV.

The disordered stretch occupies residues 1–118; that stretch reads MADENPQAQG…SQQEEAMRFS (118 aa). The segment covering 93–115 has biased composition (basic and acidic residues); the sequence is LVDRETLRRRQEERERSQQEEAM. In terms of domain architecture, mRNA cap 0 methyltransferase spans 146–502; that stretch reads SKIKGLRSFN…FYHAFCFYKV (357 aa). 155–156 contacts mRNA; it reads NN. S-adenosyl-L-methionine-binding positions include K159, G202, D226, D264, 307 to 309, and Y312; that span reads MFT. Basic and acidic residues predominate over residues 360–369; sequence ERETAAKKEE. Residues 360–381 are disordered; it reads ERETAAKKEEAEPEDGEVEEDD. Acidic residues predominate over residues 370-381; the sequence is AEPEDGEVEEDD.

Belongs to the class I-like SAM-binding methyltransferase superfamily. mRNA cap 0 methyltransferase family.

The protein localises to the nucleus. The enzyme catalyses a 5'-end (5'-triphosphoguanosine)-ribonucleoside in mRNA + S-adenosyl-L-methionine = a 5'-end (N(7)-methyl 5'-triphosphoguanosine)-ribonucleoside in mRNA + S-adenosyl-L-homocysteine. Functionally, responsible for methylating the 5'-cap structure of mRNAs. The polypeptide is mRNA cap guanine-N(7) methyltransferase (abd1) (Aspergillus oryzae (strain ATCC 42149 / RIB 40) (Yellow koji mold)).